The sequence spans 192 residues: Signal peptidase complex catalytic subunit SEC11C (192 aa).

The Cytoplasmic segment spans residues 1-28 (MVRAGAVGTHLPTSSLDIFGDLRKMNKR). A helical; Signal-anchor for type II membrane protein membrane pass occupies residues 29–48 (QLYYQVLNFAMIVSSALMIW). The Lumenal portion of the chain corresponds to 49–192 (KGLIVLTGSE…GAYVLLKRES (144 aa)). Active-site charge relay system residues include S68, H108, and D134. The segment at 177–188 (ALLAVMGAYVLL) is C-terminal short (CTS) helix.

This sequence belongs to the peptidase S26B family. In terms of assembly, component of the signal peptidase complex paralog C (SPC-C) composed of a catalytic subunit SEC11C and three accessory subunits SPCS1, SPCS2 and SPCS3. Within the complex, interacts with SPCS2 and SPCS3. The complex induces a local thinning of the ER membrane which is used to measure the length of the signal peptide (SP) h-region of protein substrates. This ensures the selectivity of the complex towards h-regions shorter than 18-20 amino acids. In terms of processing, may undergo processing at the N-terminus.

The protein resides in the endoplasmic reticulum membrane. It carries out the reaction Cleavage of hydrophobic, N-terminal signal or leader sequences from secreted and periplasmic proteins.. Catalytic component of the signal peptidase complex (SPC) which catalyzes the cleavage of N-terminal signal sequences from nascent proteins as they are translocated into the lumen of the endoplasmic reticulum. Specifically cleaves N-terminal signal peptides that contain a hydrophobic alpha-helix (h-region) shorter than 18-20 amino acids. This Mus musculus (Mouse) protein is Signal peptidase complex catalytic subunit SEC11C (Sec11c).